The primary structure comprises 220 residues: Regulatory protein VanRB (220 aa).

In terms of domain architecture, Response regulatory spans 4–117 (RILLVEDDDH…ILLKRVEALL (114 aa)). Asp53 is subject to 4-aspartylphosphate. Positions 124-218 (AKEFRVGRLT…IRGVGYRLEE (95 aa)) form a DNA-binding region, ompR/PhoB-type.

In terms of processing, may be phosphorylated by VanSB. May also be dephosphorylated by VanSB.

Its subcellular location is the cytoplasm. Member of the two-component regulatory system VanSB/VanRB. Activates the transcription of vanSB, vanYB and vanW in response to vancomycin which results in vancomycin resistance. This is Regulatory protein VanRB (vanRB) from Enterococcus faecalis (strain ATCC 700802 / V583).